The following is a 314-amino-acid chain: Putative methylthioribose-1-phosphate isomerase (314 aa).

Substrate is bound by residues 45 to 47 (RGA), Arg-79, and Gln-177. Asp-218 serves as the catalytic Proton donor. 227-228 (NK) provides a ligand contact to substrate.

The protein belongs to the eIF-2B alpha/beta/delta subunits family. MtnA subfamily.

The catalysed reaction is 5-(methylsulfanyl)-alpha-D-ribose 1-phosphate = 5-(methylsulfanyl)-D-ribulose 1-phosphate. Functionally, catalyzes the interconversion of methylthioribose-1-phosphate (MTR-1-P) into methylthioribulose-1-phosphate (MTRu-1-P). This chain is Putative methylthioribose-1-phosphate isomerase, found in Methanosphaera stadtmanae (strain ATCC 43021 / DSM 3091 / JCM 11832 / MCB-3).